A 238-amino-acid chain; its full sequence is Citrate-binding protein (238 aa).

The first 31 residues, 1–31 (MKMKRSPYCFCCSFALLLLVSFLKDRHFCSA), serve as a signal peptide directing secretion. Positions 225–238 (LEGCNNNHGTWLVQ) are cleaved as a propeptide — removed in mature form.

The protein localises to the vacuole. May be a subunit of a vacuolar malate and citrate transporter. The sequence is that of Citrate-binding protein (CBP) from Hevea brasiliensis (Para rubber tree).